A 1978-amino-acid chain; its full sequence is Sodium channel protein type 8 subunit alpha (1978 aa).

2 disordered regions span residues 1–20 (MAAR…FTPE) and 28–62 (RIAE…LEAG). Topologically, residues 1–132 (MAARVLAPPG…RIAIKILIHS (132 aa)) are cytoplasmic. Over residues 28–61 (RIAESKLKKPPKADGSHREDDEDSKPKPNSDLEA) the composition is skewed to basic and acidic residues. An I repeat occupies 114-442 (ILSPFNLIRR…KAMLEQLKKQ (329 aa)). Residues 133-151 (VFSMIIMCTILTNCVFMTF) traverse the membrane as a helical segment. At 152 to 158 (SNPPEWS) the chain is on the extracellular side. A helical membrane pass occupies residues 159 to 179 (KNVEYTFTGIYTFESLVKIIA). Topologically, residues 180–193 (RGFCIDGFTFLRDP) are cytoplasmic. A helical membrane pass occupies residues 194 to 211 (WNWLDFSVIMMAYVTEFV). Over 212–217 (DLGNVS) the chain is Extracellular. An N-linked (GlcNAc...) asparagine glycan is attached at asparagine 215. A helical transmembrane segment spans residues 218–234 (ALRTFRVLRALKTISVI). The Cytoplasmic portion of the chain corresponds to 235–253 (PGLKTIVGALIQSVKKLSD). The helical transmembrane segment at 254–273 (VMILTVFCLSVFALIGLQLF) threads the bilayer. Residues 274–355 (MGNLRNKCVV…PNYGYTSFDT (82 aa)) are Extracellular-facing. Cysteine 281 and cysteine 333 are disulfide-bonded. N-linked (GlcNAc...) asparagine glycans are attached at residues asparagine 289, asparagine 295, asparagine 308, and asparagine 326. Residues 356–380 (FSWAFLALFRLMTQDYWENLYQLTL) constitute an intramembrane region (pore-forming). Na(+) is bound at residue glutamate 373. The Extracellular portion of the chain corresponds to 381-387 (RAAGKTY). A helical membrane pass occupies residues 388–408 (MIFFVLVIFVGSFYLVNLILA). At 409-751 (VVAMAYEEQN…EIVNLIVMDP (343 aa)) the chain is on the cytoplasmic side. 2 disordered regions span residues 446–530 (AQAA…KAFR) and 576–597 (DPGS…SEGR). The span at 473-486 (SPRSSSELSKLSSK) shows a compositional bias: low complexity. Basic residues predominate over residues 489–500 (KERRNRRKKRKQ). Basic and acidic residues-rich tracts occupy residues 501 to 530 (KELS…KAFR) and 586 to 597 (DEHSTVEESEGR). Residues serine 518 and serine 520 each carry the phosphoserine modification. Residues 733-1005 (CHPYWIKLKE…QISVIRIKKG (273 aa)) form an II repeat. The chain crosses the membrane as a helical span at residues 752-770 (FVDLAITICIVLNTLFMAM). The Extracellular segment spans residues 771 to 781 (EHHPMTPQFEH). Residues 782 to 801 (VLAVGNLVFTGIFTAEMFLK) form a helical membrane-spanning segment. Over 802–815 (LIAMDPYYYFQEGW) the chain is Cytoplasmic. The helical transmembrane segment at 816–835 (NIFDGFIVSLSLMELGLADV) threads the bilayer. At 836–837 (EG) the chain is on the extracellular side. Residues 838 to 855 (LSVLRSFRLLRVFKLAKS) traverse the membrane as a helical segment. Topologically, residues 856 to 871 (WPTLNMLIKIIGNSVG) are cytoplasmic. A helical transmembrane segment spans residues 872 to 890 (ALGNLTLVLAIIVFIFAVV). At 891–919 (GMQLFGKSYKECVCKISQECKLPRWHMND) the chain is on the extracellular side. An intrachain disulfide couples cysteine 904 to cysteine 910. An intramembrane region (pore-forming) is located at residues 920–940 (FFHSFLIVFRVLCGEWIETMW). 2 residues coordinate Na(+): glutamate 934 and glutamate 937. The Extracellular portion of the chain corresponds to 941–953 (DCMEVAGQAMCLI). Cysteine 942 and cysteine 951 form a disulfide bridge. A helical transmembrane segment spans residues 954–974 (VFMMVMVIGNLVVLNLFLALL). The Cytoplasmic portion of the chain corresponds to 975–1197 (LSSFSADNLA…TCFLIVEHNW (223 aa)). The segment at 1105-1146 (NLNTEDVSSESDPEGSKDKLDDTSSSEGSTIDIKPEVEEVPV) is disordered. The stretch at 1178–1493 (LGKSWWILRK…KKYYNAMKKL (316 aa)) is one III repeat. Residues 1198 to 1215 (FETFIIFMILLSSGALAF) form a helical membrane-spanning segment. Topologically, residues 1216–1228 (EDIYIEQRKTIRT) are extracellular. Residues 1229–1247 (ILEYADKVFTYIFILEMLL) form a helical membrane-spanning segment. Residues 1248 to 1261 (KWTAYGFVKFFTNA) lie on the Cytoplasmic side of the membrane. A helical transmembrane segment spans residues 1262–1280 (WCWLDFLIVAVSLVSLIAN). Over 1281-1288 (ALGYSELG) the chain is Extracellular. A helical membrane pass occupies residues 1289 to 1307 (AIKSLRTLRALRPLRALSR). Residues 1308–1324 (FEGMRVVVNALVGAIPS) are Cytoplasmic-facing. A helical membrane pass occupies residues 1325-1344 (IMNVLLVCLIFWLIFSIMGV). At 1345-1397 (NLFAGKYHYCFNETSEIRFEIDEVNNKTDCEKLMEGNNTEIRWKNVKINFDNV) the chain is on the extracellular side. An intrachain disulfide couples cysteine 1354 to cysteine 1374. 3 N-linked (GlcNAc...) asparagine glycosylation sites follow: asparagine 1356, asparagine 1370, and asparagine 1381. Positions 1398–1419 (GAGYLALLQVATFKGWMDIMYA) form an intramembrane region, pore-forming. The Extracellular segment spans residues 1420 to 1436 (AVDSRKPDEQPDYEGNI). The helical transmembrane segment at 1437 to 1458 (YMYIYFVIFIIFGSFFTLNLFI) threads the bilayer. At 1459–1521 (GVIIDNFNQQ…IVFDFVTQQA (63 aa)) the chain is on the cytoplasmic side. Residue serine 1495 is modified to Phosphoserine; by PKC. One copy of the IV repeat lies at 1502–1799 (IPRPLNKIQG…WEKFDPDATQ (298 aa)). The helical transmembrane segment at 1522–1539 (FDIVIMMLICLNMVTMMV) threads the bilayer. At 1540-1550 (ETDTQSKQMEN) the chain is on the extracellular side. Residues 1551-1569 (ILYWINLVFVIFFTCECVL) form a helical membrane-spanning segment. The Cytoplasmic portion of the chain corresponds to 1570-1581 (KMFALRHYYFTI). The helical transmembrane segment at 1582–1599 (GWNIFDFVVVILSIVGMF) threads the bilayer. Topologically, residues 1600-1612 (LADIIEKYFVSPT) are extracellular. The chain crosses the membrane as a helical span at residues 1613–1629 (LFRVIRLARIGRILRLI). The Cytoplasmic segment spans residues 1630 to 1648 (KGAKGIRTLLFALMMSLPA). Residues 1649 to 1666 (LFNIGLLLFLVMFIFSIF) form a helical membrane-spanning segment. Residues 1667–1688 (GMSNFAYVKHEAGIDDMFNFET) lie on the Extracellular side of the membrane. Positions 1689–1711 (FGNSMICLFQITTSAGWDGLLLP) form an intramembrane region, pore-forming. Residues 1712–1740 (ILNRPPDCSLDKEHPGSGFKGDCGNPSVG) lie on the Extracellular side of the membrane. A disulfide bridge links cysteine 1719 with cysteine 1734. The helical transmembrane segment at 1741-1763 (IFFFVSYIIISFLIVVNMYIAII) threads the bilayer. Residues 1764–1978 (LENFSVATEE…RQKEVRESKC (215 aa)) are Cytoplasmic-facing. An IQ domain is found at 1893–1922 (EEVSAVVLQRAYRGHLARRGFICRKITSNK). The tract at residues 1924 to 1978 (ENGGTHREKKESTPSTASLPSYDSVTKPDKEKQQRAEEGRRERAKRQKEVRESKC) is disordered. A compositionally biased stretch (polar residues) spans 1936 to 1947 (TPSTASLPSYDS). Over residues 1949 to 1978 (TKPDKEKQQRAEEGRRERAKRQKEVRESKC) the composition is skewed to basic and acidic residues.

This sequence belongs to the sodium channel (TC 1.A.1.10) family. Nav1.6/SCN8A subfamily. The voltage-sensitive sodium channel consists of an ion-conducting pore-forming alpha subunit regulated by one or more beta-1 (SCN1B), beta-2 (SCN2B), beta-3 (SCN3B) and/or beta-4 (SCN4B) subunits. Beta-1 (SCN1B) and beta-3 (SCN3B) are non-covalently associated with alpha, while beta-2 (SCN2B) and beta-4 (SCN4B) are covalently linked by disulfide bonds. Interacts with FGF13. Interacts with NEDD4 and NEDD4L. Interacts with FGF14, GBG3, GBB2 and SCN1B. Interacts with TMEM233. Interacts with the conotoxin GVIIJ. Interacts with the scorpion toxin BMK M1. Interacts with CALM1; the interaction modulates the inactivation rate of SCN8A. Post-translationally, may be ubiquitinated by NEDD4L; which would promote its endocytosis. Phosphorylation at Ser-1495 by PKC in a highly conserved cytoplasmic loop slows inactivation of the sodium channel and reduces peak sodium currents. In terms of tissue distribution, expressed in the hippocampus (at protein level). Expressed in brain, cerebellum and spinal cord. As to expression, expressed in non-neuronal tissues, such as monocytes/macrophages.

It is found in the cell membrane. Its subcellular location is the cell projection. The protein localises to the axon. The protein resides in the cytoplasmic vesicle. It localises to the podosome. It catalyses the reaction Na(+)(in) = Na(+)(out). In terms of biological role, pore-forming subunit of a voltage-gated sodium channel complex assuming opened or closed conformations in response to the voltage difference across membranes and through which sodium ions selectively pass along their electrochemical gradient. Contributes to neuronal excitability by regulating action potential threshold and propagation. Functionally, more specifically expressed in non-neuronal cells, could play a role in sodium release from intracellular compartments and participate in the control of podosomes formation and macrophages adhesion and movement. The sequence is that of Sodium channel protein type 8 subunit alpha from Mus musculus (Mouse).